The following is a 104-amino-acid chain: Urease subunit gamma (104 aa).

The protein belongs to the urease gamma subunit family. Heterotrimer of UreA (gamma), UreB (beta) and UreC (alpha) subunits. Three heterotrimers associate to form the active enzyme.

It is found in the cytoplasm. The catalysed reaction is urea + 2 H2O + H(+) = hydrogencarbonate + 2 NH4(+). Its pathway is nitrogen metabolism; urea degradation; CO(2) and NH(3) from urea (urease route): step 1/1. In Actinomyces naeslundii, this protein is Urease subunit gamma.